We begin with the raw amino-acid sequence, 433 residues long: MRVLVLGSGVIGTTSAYYLARAGFQVTVVDRQPAVGMETSFANAGQVSPGYASPWAAPGVPLKAIKWLLQRHSPLAIKATADIDQYLWMAQMLRNCTANRYAVNKERMVRLSEYSRDCLDELRIETGIAYEGRSLGTTQLFRTQAQLDNAAKDIAVLEQSGVPYELLDRAGIARVEPALAGVTGILSGALRLPNDQTGDCQLFTTRLAQMAVELGVEFRYGQNIERLEHAGDTVSGVWIDGVLETADRYVLALGSYSPQLLKPLGIKAPVYPLKGYSLTVPISNPAMAPTSTILDETYKVAITRFDNRIRVGGMAEIAGFDLSLNPRRRETLEMIVGDLYPQGGDLSQASFWTGLRPTTPDGTPIVGATPLRNLFLNTGHGTLGWTMACGSGRLLADLIARKRPQISAAGLDISRYGNPQENAQHVNPAPAHQ.

3 to 17 is an FAD binding site; it reads VLVLGSGVIGTTSAY.

It belongs to the DadA oxidoreductase family. The cofactor is FAD.

The catalysed reaction is a D-alpha-amino acid + A + H2O = a 2-oxocarboxylate + AH2 + NH4(+). Functionally, oxidative deamination of D-amino acids. In Pseudomonas syringae pv. tomato (strain ATCC BAA-871 / DC3000), this protein is D-amino acid dehydrogenase.